A 135-amino-acid polypeptide reads, in one-letter code: Protein E6 (135 aa).

2 zinc fingers span residues 23–59 and 96–132; these read CTFC…CTAC and CRVC…CRIC.

This sequence belongs to the papillomaviridae E6 protein family. Forms homodimers. Interacts with ubiquitin-protein ligase UBE3A/E6-AP; this interaction stimulates UBE3A ubiquitin activity. Interacts with host BAK1.

It localises to the host cytoplasm. It is found in the host nucleus. Its function is as follows. Plays a major role in the induction and maintenance of cellular transformation. E6 associates with host UBE3A/E6-AP ubiquitin-protein ligase and modulates its activity. Protects host keratinocytes from apoptosis by mediating the degradation of host BAK1. May also inhibit host immune response. This is Protein E6 from Mastomys natalensis papillomavirus (isolate African multimammate rat) (MnPV).